The sequence spans 112 residues: Larval cuticle protein III/IV (112 aa).

The first 16 residues, 1 to 16 (MFKILLVCALAALVAA), serve as a signal peptide directing secretion. Positions 31-92 (PDGFKTVVSL…PSSDLLPVAP (62 aa)) constitute a Chitin-binding type R&amp;R domain.

Its function is as follows. Component of the larval cuticle. This Drosophila miranda (Fruit fly) protein is Larval cuticle protein III/IV (Lcp3).